We begin with the raw amino-acid sequence, 147 residues long: Prefoldin subunit alpha 2 (147 aa).

It belongs to the prefoldin subunit alpha family. Heterohexamer of two alpha and four beta subunits.

The protein localises to the cytoplasm. Functionally, molecular chaperone capable of stabilizing a range of proteins. Seems to fulfill an ATP-independent, HSP70-like function in archaeal de novo protein folding. The chain is Prefoldin subunit alpha 2 (pfdA2) from Methanocaldococcus jannaschii (strain ATCC 43067 / DSM 2661 / JAL-1 / JCM 10045 / NBRC 100440) (Methanococcus jannaschii).